We begin with the raw amino-acid sequence, 525 residues long: MTENIHKHRILILDFGSQYTQLVARRVRELGVYCELWAWDVTEAQIRDFNPSGIILSGGPESTTEENSPRAPQYVFEAGVPVFGVCYGMQTMAMQLGGHVEASNEREFGYAQVEVVNDSALVRGIEDALTADGKPLLDVWMSHGDKVTAIPSDFVTVASTESCPFAIMANEEKRFYGVQFHPEVTHTRQGMHMLERFVRDICQCEALWTPAKIIDDAVARIREQVGDDKVILGLSGGVDSSVTAMLLHRAIGKNLTCVFVDNGLLRLNEAEQVLDMFGDHFGLNIVHVPAEDRFLSALAGENDPEAKRKIIGRVFVEVFDEEALKLEDVKWLAQGTIYPDVIESAASATGKAHVIKSHHNVGGLPKEMKMGLIEPLKELFKDEVRKIGLELGLPYDMLYRHPFPGPGLGVRVLGEVKKEYCDLLRRADAIFIEELRKADLYNKVSQAFTVFLPVRSVGVMGDGRKYDWVVSLRAVETIDFMTAHWAHLPYDFLGRVSNRIINEVNGISRVVYDISGKPPATIEWE.

A Glutamine amidotransferase type-1 domain is found at 9–207 (RILILDFGSQ…VRDICQCEAL (199 aa)). Cys-86 acts as the Nucleophile in catalysis. Residues His-181 and Glu-183 contribute to the active site. In terms of domain architecture, GMPS ATP-PPase spans 208–400 (WTPAKIIDDA…LGLPYDMLYR (193 aa)). 235–241 (SGGVDSS) provides a ligand contact to ATP.

Homodimer.

The catalysed reaction is XMP + L-glutamine + ATP + H2O = GMP + L-glutamate + AMP + diphosphate + 2 H(+). It functions in the pathway purine metabolism; GMP biosynthesis; GMP from XMP (L-Gln route): step 1/1. In terms of biological role, catalyzes the synthesis of GMP from XMP. The sequence is that of GMP synthase [glutamine-hydrolyzing] from Shigella boydii serotype 18 (strain CDC 3083-94 / BS512).